The following is a 356-amino-acid chain: Phospho-N-acetylmuramoyl-pentapeptide-transferase (356 aa).

10 helical membrane passes run 4-24, 53-73, 76-96, 116-136, 152-172, 186-206, 228-248, 253-273, 278-298, and 333-353; these read ILLAGAVSMIGTLVGTRWFIH, GGAVIIVSVLLAYLVAHLVTW, PSISALLVLWLFSGLGFIGFL, LLGQAFVAITFAIGVMYFPDV, ISWLYLPVWLGIVWVILLIAG, LATGASTMVFGAYTVLSIWQF, DIAVVAIAIAGACFGFLWWNA, IFLGDTGSLALGGAVAGMAVV, LLLVIIGALFVIETVSVMLQV, and FWIICGLAVSAGLGIFYAEWV.

Belongs to the glycosyltransferase 4 family. MraY subfamily. Mg(2+) serves as cofactor.

It is found in the cell membrane. The enzyme catalyses UDP-N-acetyl-alpha-D-muramoyl-L-alanyl-gamma-D-glutamyl-meso-2,6-diaminopimeloyl-D-alanyl-D-alanine + di-trans,octa-cis-undecaprenyl phosphate = di-trans,octa-cis-undecaprenyl diphospho-N-acetyl-alpha-D-muramoyl-L-alanyl-D-glutamyl-meso-2,6-diaminopimeloyl-D-alanyl-D-alanine + UMP. It participates in cell wall biogenesis; peptidoglycan biosynthesis. Catalyzes the initial step of the lipid cycle reactions in the biosynthesis of the cell wall peptidoglycan: transfers peptidoglycan precursor phospho-MurNAc-pentapeptide from UDP-MurNAc-pentapeptide onto the lipid carrier undecaprenyl phosphate, yielding undecaprenyl-pyrophosphoryl-MurNAc-pentapeptide, known as lipid I. This is Phospho-N-acetylmuramoyl-pentapeptide-transferase from Cutibacterium acnes (strain DSM 16379 / KPA171202) (Propionibacterium acnes).